Here is a 529-residue protein sequence, read N- to C-terminus: E3 ubiquitin-protein ligase arih1 (529 aa).

Disordered regions lie at residues Met-1–Leu-30 and Gly-49–Glu-68. Over residues Cys-51 to Gly-64 the composition is skewed to gly residues. Residues Thr-77–Asn-125 are UBA-like. The tract at residues Gln-154 to Asn-365 is TRIAD supradomain. Zn(2+) is bound by residues Cys-158, Cys-161, Cys-175, His-177, Cys-180, Cys-183, Cys-203, Cys-208, Cys-248, Cys-253, Cys-269, Cys-271, Cys-276, Cys-279, His-284, Cys-289, Cys-316, and Cys-319. The segment at Cys-158–Cys-208 adopts an RING-type 1 zinc-finger fold. The segment at Leu-228–Cys-289 adopts an IBR-type zinc-finger fold. Residues Cys-316–Cys-347 form an RING-type 2; atypical zinc finger. Residue Cys-329 is part of the active site. The Zn(2+) site is built by Cys-334, Cys-339, Cys-344, Cys-347, His-354, and Cys-361. The interval Arg-380–Asp-529 is ariadne domain.

This sequence belongs to the RBR family. Ariadne subfamily. As to quaternary structure, interacts (via the first RING-type zinc finger) with ube2l3. Associates with cullin-RING ubiquitin ligase (CRL) complexes containing neddylated cullin.

Its subcellular location is the cytoplasm. It is found in the nucleus. The enzyme catalyses [E2 ubiquitin-conjugating enzyme]-S-ubiquitinyl-L-cysteine + [acceptor protein]-L-lysine = [E2 ubiquitin-conjugating enzyme]-L-cysteine + [acceptor protein]-N(6)-ubiquitinyl-L-lysine.. It participates in protein modification; protein ubiquitination. Its activity is regulated as follows. Autoinhibited by the ariadne domain, which masks the second RING-type zinc finger that contains the active site and inhibits the E3 activity. Inhibition is relieved upon binding to neddylated cullin-RING ubiquitin ligase complexes, which activate the E3 ligase activity of ARIH1. Functionally, E3 ubiquitin-protein ligase, which catalyzes ubiquitination of target proteins together with ubiquitin-conjugating enzyme E2 ube2l3. Acts as an atypical E3 ubiquitin-protein ligase by working together with cullin-RING ubiquitin ligase (CRL) complexes and initiating ubiquitination of CRL substrates: associates with CRL complexes and specifically mediates addition of the first ubiquitin on CRLs targets. The initial ubiquitin is then elongated. E3 ubiquitin-protein ligase activity is activated upon binding to neddylated cullin-RING ubiquitin ligase complexes. In Xenopus tropicalis (Western clawed frog), this protein is E3 ubiquitin-protein ligase arih1 (arih1).